A 312-amino-acid polypeptide reads, in one-letter code: tRNA dimethylallyltransferase (312 aa).

19–26 (GPSGSGKS) is a binding site for ATP. 21 to 26 (SGSGKS) contributes to the substrate binding site. Residues 44–47 (DSLS) form an interaction with substrate tRNA region.

Belongs to the IPP transferase family. Monomer. The cofactor is Mg(2+).

The enzyme catalyses adenosine(37) in tRNA + dimethylallyl diphosphate = N(6)-dimethylallyladenosine(37) in tRNA + diphosphate. Its function is as follows. Catalyzes the transfer of a dimethylallyl group onto the adenine at position 37 in tRNAs that read codons beginning with uridine, leading to the formation of N6-(dimethylallyl)adenosine (i(6)A). The sequence is that of tRNA dimethylallyltransferase from Helicobacter pylori (strain J99 / ATCC 700824) (Campylobacter pylori J99).